The primary structure comprises 220 residues: Putative glutathione S-transferase C1183.02 (220 aa).

The GST N-terminal domain maps to phenylalanine 2 to aspartate 81. The GST C-terminal domain maps to asparagine 89 to threonine 216.

It belongs to the GST superfamily.

The protein localises to the cytoplasm. The enzyme catalyses RX + glutathione = an S-substituted glutathione + a halide anion + H(+). In terms of biological role, involved in the oxidative stress response and detoxification. This is Putative glutathione S-transferase C1183.02 from Schizosaccharomyces pombe (strain 972 / ATCC 24843) (Fission yeast).